The primary structure comprises 78 residues: D-alanyl carrier protein (78 aa).

In terms of domain architecture, Carrier spans 1–78; that stretch reads MEFRDQVLDL…KIVAVLEELR (78 aa). Ser-36 bears the O-(pantetheine 4'-phosphoryl)serine mark.

It belongs to the DltC family. Post-translationally, 4'-phosphopantetheine is transferred from CoA to a specific serine of apo-DCP.

It is found in the cytoplasm. It functions in the pathway cell wall biogenesis; lipoteichoic acid biosynthesis. Its function is as follows. Carrier protein involved in the D-alanylation of lipoteichoic acid (LTA). The loading of thioester-linked D-alanine onto DltC is catalyzed by D-alanine--D-alanyl carrier protein ligase DltA. The DltC-carried D-alanyl group is further transferred to cell membrane phosphatidylglycerol (PG) by forming an ester bond, probably catalyzed by DltD. D-alanylation of LTA plays an important role in modulating the properties of the cell wall in Gram-positive bacteria, influencing the net charge of the cell wall. The chain is D-alanyl carrier protein from Staphylococcus saprophyticus subsp. saprophyticus (strain ATCC 15305 / DSM 20229 / NCIMB 8711 / NCTC 7292 / S-41).